The primary structure comprises 115 residues: Cytochrome c (115 aa).

4 residues coordinate heme c: cysteine 26, cysteine 29, histidine 30, and methionine 91.

The protein belongs to the cytochrome c family. Binds 1 heme c group covalently per subunit.

It localises to the mitochondrion intermembrane space. Functionally, electron carrier protein. The oxidized form of the cytochrome c heme group can accept an electron from the heme group of the cytochrome c1 subunit of cytochrome reductase. Cytochrome c then transfers this electron to the cytochrome oxidase complex, the final protein carrier in the mitochondrial electron-transport chain. The chain is Cytochrome c from Theileria annulata.